We begin with the raw amino-acid sequence, 156 residues long: Large ribosomal subunit protein uL15 (156 aa).

Residues 1–11 (MKLNDLRDKPG) show a composition bias toward basic and acidic residues. Positions 1 to 40 (MKLNDLRDKPGSVKARKRVGRGIGSGTGKTGGRGVKGQKS) are disordered. Gly residues predominate over residues 21-35 (RGIGSGTGKTGGRGV).

This sequence belongs to the universal ribosomal protein uL15 family. Part of the 50S ribosomal subunit.

Functionally, binds to the 23S rRNA. In Brucella anthropi (strain ATCC 49188 / DSM 6882 / CCUG 24695 / JCM 21032 / LMG 3331 / NBRC 15819 / NCTC 12168 / Alc 37) (Ochrobactrum anthropi), this protein is Large ribosomal subunit protein uL15.